The sequence spans 270 residues: tRNA pseudouridine synthase A (270 aa).

The active-site Nucleophile is D52. A substrate-binding site is contributed by Y110.

This sequence belongs to the tRNA pseudouridine synthase TruA family. Homodimer.

It catalyses the reaction uridine(38/39/40) in tRNA = pseudouridine(38/39/40) in tRNA. In terms of biological role, formation of pseudouridine at positions 38, 39 and 40 in the anticodon stem and loop of transfer RNAs. The protein is tRNA pseudouridine synthase A of Roseiflexus castenholzii (strain DSM 13941 / HLO8).